The primary structure comprises 359 residues: Outer membrane protein P2 (359 aa).

An N-terminal signal peptide occupies residues 1 to 20 (MKKTLAALIVGAFAASAANA).

Belongs to the Gram-negative porin family. In terms of assembly, homotrimer.

The protein localises to the cell outer membrane. In terms of biological role, forms pores that allow passive diffusion of small molecules across the outer membrane. This Haemophilus influenzae (strain ATCC 51907 / DSM 11121 / KW20 / Rd) protein is Outer membrane protein P2 (ompP2).